The sequence spans 367 residues: Glutamate 5-kinase (367 aa).

Lys10 lines the ATP pocket. Positions 50, 137, and 149 each coordinate substrate. ATP contacts are provided by residues 169–170 and 211–217; these read TD and TGGMSTK. A PUA domain is found at 275 to 353; the sequence is AGIITIDAGA…QDIEQVLGYE (79 aa).

It belongs to the glutamate 5-kinase family.

It localises to the cytoplasm. The catalysed reaction is L-glutamate + ATP = L-glutamyl 5-phosphate + ADP. Its pathway is amino-acid biosynthesis; L-proline biosynthesis; L-glutamate 5-semialdehyde from L-glutamate: step 1/2. Catalyzes the transfer of a phosphate group to glutamate to form L-glutamate 5-phosphate. The protein is Glutamate 5-kinase of Pasteurella multocida (strain Pm70).